The sequence spans 59 residues: Mitochondrial sheath formation-associated protein (59 aa).

Residues 1–6 (MIVLGW) lie on the Mitochondrial intermembrane side of the membrane. Helical transmembrane passes span 2 to 22 (IVLG…FPEL) and 7 to 23 (MFFV…PELM). The Cytoplasmic segment spans residues 24–40 (PPTLKWQERWPVQESKT).

In terms of assembly, interacts with VDAC3.

Its subcellular location is the mitochondrion outer membrane. Functionally, regulates sperm development. May be involved in mitochondrial sheath formation. This is Mitochondrial sheath formation-associated protein from Homo sapiens (Human).